Reading from the N-terminus, the 660-residue chain is Putative ABC transporter ATP-binding MG390 homolog (660 aa).

Positions Gln6 to Val126 constitute a Peptidase C39 domain. Cys12 is an active-site residue. 6 helical membrane-spanning segments follow: residues Leu150 to Thr170, Ile188 to Leu208, His265 to Ile285, Phe290 to Phe310, Ser379 to Glu399, and Tyr402 to Thr422. In terms of domain architecture, ABC transporter spans Ile464 to Thr660. Gly494–Ser501 contacts ATP.

This sequence belongs to the ABC transporter superfamily.

It localises to the cell membrane. In Mycoplasma pneumoniae (strain ATCC 29342 / M129 / Subtype 1) (Mycoplasmoides pneumoniae), this protein is Putative ABC transporter ATP-binding MG390 homolog.